Consider the following 158-residue polypeptide: Antitoxin TacA (158 aa).

This sequence belongs to the TacA antitoxin family. As to quaternary structure, forms a complex with cognate toxin TacT.

In terms of biological role, antitoxin component of a type II toxin-antitoxin (TA) system. Counteracts the toxic effect of cognate toxin TacT. Functionally, tacA-TacT both represses and derepresses expression of its own operon. This chain is Antitoxin TacA, found in Mycobacterium tuberculosis (strain ATCC 25618 / H37Rv).